The primary structure comprises 70 residues: Large ribosomal subunit protein bL31 (70 aa).

Zn(2+) is bound by residues Cys-16, Cys-18, Cys-37, and Cys-40.

Belongs to the bacterial ribosomal protein bL31 family. Type A subfamily. Part of the 50S ribosomal subunit. Zn(2+) serves as cofactor.

In terms of biological role, binds the 23S rRNA. This chain is Large ribosomal subunit protein bL31, found in Salmonella agona (strain SL483).